Here is a 227-residue protein sequence, read N- to C-terminus: ATP-dependent dethiobiotin synthetase BioD (227 aa).

13–18 lines the ATP pocket; sequence DIGKTY. T17 is a binding site for Mg(2+). K38 is a catalytic residue. S42 contacts substrate. Residues D55, 116-119, and 179-180 contribute to the ATP site; these read EGSG and NN. Mg(2+) contacts are provided by D55 and E116.

The protein belongs to the dethiobiotin synthetase family. In terms of assembly, homodimer. Mg(2+) is required as a cofactor.

It is found in the cytoplasm. The enzyme catalyses (7R,8S)-7,8-diammoniononanoate + CO2 + ATP = (4R,5S)-dethiobiotin + ADP + phosphate + 3 H(+). It functions in the pathway cofactor biosynthesis; biotin biosynthesis; biotin from 7,8-diaminononanoate: step 1/2. In terms of biological role, catalyzes a mechanistically unusual reaction, the ATP-dependent insertion of CO2 between the N7 and N8 nitrogen atoms of 7,8-diaminopelargonic acid (DAPA, also called 7,8-diammoniononanoate) to form a ureido ring. The sequence is that of ATP-dependent dethiobiotin synthetase BioD from Clostridium botulinum (strain 657 / Type Ba4).